A 375-amino-acid polypeptide reads, in one-letter code: 23S rRNA (uracil(747)-C(5))-methyltransferase RlmC (375 aa).

[4Fe-4S] cluster contacts are provided by C3, C11, C14, and C87. 4 residues coordinate S-adenosyl-L-methionine: Q212, F241, E262, and N307. C334 functions as the Nucleophile in the catalytic mechanism.

Belongs to the class I-like SAM-binding methyltransferase superfamily. RNA M5U methyltransferase family. RlmC subfamily.

The enzyme catalyses uridine(747) in 23S rRNA + S-adenosyl-L-methionine = 5-methyluridine(747) in 23S rRNA + S-adenosyl-L-homocysteine + H(+). In terms of biological role, catalyzes the formation of 5-methyl-uridine at position 747 (m5U747) in 23S rRNA. In Salmonella enteritidis PT4 (strain P125109), this protein is 23S rRNA (uracil(747)-C(5))-methyltransferase RlmC.